The chain runs to 478 residues: Argininosuccinate synthase (478 aa).

ATP-binding positions include 17–25 (AFSGGLDTS) and alanine 43. Tyrosine 99 provides a ligand contact to L-citrulline. Residues glycine 129 and threonine 131 each coordinate ATP. Positions 131, 135, and 136 each coordinate L-aspartate. Residue asparagine 135 coordinates L-citrulline. Aspartate 136 is an ATP binding site. L-citrulline-binding residues include arginine 139 and serine 192. Aspartate 194 lines the ATP pocket. 3 residues coordinate L-citrulline: threonine 201, glutamate 203, and glutamate 280.

This sequence belongs to the argininosuccinate synthase family. Type 2 subfamily. As to quaternary structure, homotetramer.

The protein resides in the cytoplasm. It carries out the reaction L-citrulline + L-aspartate + ATP = 2-(N(omega)-L-arginino)succinate + AMP + diphosphate + H(+). It participates in amino-acid biosynthesis; L-arginine biosynthesis; L-arginine from L-ornithine and carbamoyl phosphate: step 2/3. The polypeptide is Argininosuccinate synthase (Leifsonia xyli subsp. xyli (strain CTCB07)).